The chain runs to 322 residues: Undecaprenyl-phosphate 4-deoxy-4-formamido-L-arabinose transferase (322 aa).

At 1 to 235 (MFEIHPVKKV…TCLTTTPLRM (235 aa)) the chain is on the cytoplasmic side. Residues 236 to 256 (LSLLGSIIAIGGFSIAVLLVI) traverse the membrane as a helical segment. Residues 257–269 (LRLTFGPQWAAEG) are Periplasmic-facing. A helical transmembrane segment spans residues 270-290 (VFMLFAVLFTFIGAQFIGMGL). At 291-322 (LGEYIGRIYTDVRARPRYFVQQVIRPSSKENE) the chain is on the cytoplasmic side.

Belongs to the glycosyltransferase 2 family.

The protein resides in the cell inner membrane. It catalyses the reaction UDP-4-deoxy-4-formamido-beta-L-arabinose + di-trans,octa-cis-undecaprenyl phosphate = 4-deoxy-4-formamido-alpha-L-arabinopyranosyl di-trans,octa-cis-undecaprenyl phosphate + UDP. It participates in glycolipid biosynthesis; 4-amino-4-deoxy-alpha-L-arabinose undecaprenyl phosphate biosynthesis; 4-amino-4-deoxy-alpha-L-arabinose undecaprenyl phosphate from UDP-4-deoxy-4-formamido-beta-L-arabinose and undecaprenyl phosphate: step 1/2. Its pathway is bacterial outer membrane biogenesis; lipopolysaccharide biosynthesis. In terms of biological role, catalyzes the transfer of 4-deoxy-4-formamido-L-arabinose from UDP to undecaprenyl phosphate. The modified arabinose is attached to lipid A and is required for resistance to polymyxin and cationic antimicrobial peptides. The chain is Undecaprenyl-phosphate 4-deoxy-4-formamido-L-arabinose transferase from Shigella sonnei (strain Ss046).